The primary structure comprises 423 residues: Kynureninase (423 aa).

Pyridoxal 5'-phosphate-binding positions include Leu105, Ser106, 133–136 (FPSD), Asp218, His221, and Tyr243. Lys244 is modified (N6-(pyridoxal phosphate)lysine). Pyridoxal 5'-phosphate contacts are provided by Trp273 and Asn301.

It belongs to the kynureninase family. Homodimer. The cofactor is pyridoxal 5'-phosphate.

It catalyses the reaction L-kynurenine + H2O = anthranilate + L-alanine + H(+). It carries out the reaction 3-hydroxy-L-kynurenine + H2O = 3-hydroxyanthranilate + L-alanine + H(+). It functions in the pathway amino-acid degradation; L-kynurenine degradation; L-alanine and anthranilate from L-kynurenine: step 1/1. Its pathway is cofactor biosynthesis; NAD(+) biosynthesis; quinolinate from L-kynurenine: step 2/3. In terms of biological role, catalyzes the cleavage of L-kynurenine (L-Kyn) and L-3-hydroxykynurenine (L-3OHKyn) into anthranilic acid (AA) and 3-hydroxyanthranilic acid (3-OHAA), respectively. This chain is Kynureninase, found in Xanthomonas oryzae pv. oryzae (strain KACC10331 / KXO85).